Here is a 121-residue protein sequence, read N- to C-terminus: Large ribosomal subunit protein bL12 (121 aa).

This sequence belongs to the bacterial ribosomal protein bL12 family. Homodimer. Part of the ribosomal stalk of the 50S ribosomal subunit. Forms a multimeric L10(L12)X complex, where L10 forms an elongated spine to which 2 to 4 L12 dimers bind in a sequential fashion. Binds GTP-bound translation factors.

Its function is as follows. Forms part of the ribosomal stalk which helps the ribosome interact with GTP-bound translation factors. Is thus essential for accurate translation. The chain is Large ribosomal subunit protein bL12 from Streptococcus suis (strain 98HAH33).